Consider the following 510-residue polypeptide: 2,3-bisphosphoglycerate-independent phosphoglycerate mutase (510 aa).

Mn(2+) contacts are provided by D13 and S63. Residue S63 is the Phosphoserine intermediate of the active site. Residues H124, 154–155 (RD), R186, R192, 262–265 (RADR), and K334 each bind substrate. The Mn(2+) site is built by D401, H405, D442, H443, and H461.

The protein belongs to the BPG-independent phosphoglycerate mutase family. As to quaternary structure, monomer. The cofactor is Mn(2+).

It catalyses the reaction (2R)-2-phosphoglycerate = (2R)-3-phosphoglycerate. The protein operates within carbohydrate degradation; glycolysis; pyruvate from D-glyceraldehyde 3-phosphate: step 3/5. Its function is as follows. Catalyzes the interconversion of 2-phosphoglycerate and 3-phosphoglycerate. In Vibrio atlanticus (strain LGP32) (Vibrio splendidus (strain Mel32)), this protein is 2,3-bisphosphoglycerate-independent phosphoglycerate mutase.